The sequence spans 92 residues: MDKVATAAYVYGVVQGVGFRYSTQRQAAQLELSGYARNCDDGSVEVVASGEPHAVEMLIEWLKQGGPRSARVDKVLIEPHGKTDYKGFTIRY.

The region spanning 5-92 (ATAAYVYGVV…TDYKGFTIRY (88 aa)) is the Acylphosphatase-like domain. Residues arginine 20 and asparagine 38 contribute to the active site.

This sequence belongs to the acylphosphatase family.

It catalyses the reaction an acyl phosphate + H2O = a carboxylate + phosphate + H(+). The protein is Acylphosphatase (acyP) of Pectobacterium atrosepticum (strain SCRI 1043 / ATCC BAA-672) (Erwinia carotovora subsp. atroseptica).